The chain runs to 118 residues: UPF0449 protein C19orf25 homolog (118 aa).

The residue at position 63 (Y63) is a Phosphotyrosine. Residues 69-105 are a coiled coil; it reads YVAMNQRLQQAGAQLEQKRADLQQAGEELERDISQVG.

Belongs to the UPF0449 family.

The sequence is that of UPF0449 protein C19orf25 homolog from Bos taurus (Bovine).